The primary structure comprises 40 residues: Photosystem II reaction center protein J (40 aa).

A helical membrane pass occupies residues 8–28 (IPLWLIGTVTGIPVIGSMGIF).

It belongs to the PsbJ family. In terms of assembly, PSII is composed of 1 copy each of membrane proteins PsbA, PsbB, PsbC, PsbD, PsbE, PsbF, PsbH, PsbI, PsbJ, PsbK, PsbL, PsbM, PsbT, PsbX, PsbY, PsbZ, Psb30/Ycf12, at least 3 peripheral proteins of the oxygen-evolving complex and a large number of cofactors. It forms dimeric complexes.

It localises to the plastid. Its subcellular location is the chloroplast thylakoid membrane. One of the components of the core complex of photosystem II (PSII). PSII is a light-driven water:plastoquinone oxidoreductase that uses light energy to abstract electrons from H(2)O, generating O(2) and a proton gradient subsequently used for ATP formation. It consists of a core antenna complex that captures photons, and an electron transfer chain that converts photonic excitation into a charge separation. The sequence is that of Photosystem II reaction center protein J from Illicium oligandrum (Star anise).